The chain runs to 290 residues: uncharacterized protein (290 aa).

The ABC transporter domain occupies 2 to 238; sequence LKTENLSVGY…EIVNELYDLK (237 aa). Residue 34–41 participates in ATP binding; sequence GPNGAGKS.

This sequence belongs to the ABC transporter superfamily.

This is an uncharacterized protein from Methanocaldococcus jannaschii (strain ATCC 43067 / DSM 2661 / JAL-1 / JCM 10045 / NBRC 100440) (Methanococcus jannaschii).